Reading from the N-terminus, the 269-residue chain is Pertussis toxin subunit 1 (269 aa).

A signal peptide spans 1–34 (MRCTRAIRQTARTGWLTWLAILAVTAPVTSPAWA). Tryptophan 60 provides a ligand contact to NAD(+). Active-site residues include histidine 69 and glutamate 163. Residues cysteine 75 and cysteine 235 are joined by a disulfide bond.

This sequence belongs to the bacterial exotoxin subunit A family. As to quaternary structure, pertussis toxin contains five different chains, S1-S5. They are organized into 2 functional subunits: A, composed of S1 (which is toxic) and B, containing S2, S3, S5, and two copies of S4 (B binds to the membrane receptors). Dimers of S2-S4 and S3-S4 are held together by S5.

The protein resides in the secreted. Its function is as follows. S1 is an NAD-dependent ADP-ribosyltransferase, which plays a crucial role in the pathogenesis of B.pertussis causing disruption of normal host cellular regulation. It catalyzes the ADP-ribosylation of a cysteine in the alpha subunit of host heterotrimeric G proteins. In the absence of G proteins it also catalyzes the cleavage of NAD(+) into ADP-ribose and nicotinamide. It irreversibly uncouples the G-alpha GTP-binding proteins from their membrane receptors. This Bordetella pertussis (strain Tohama I / ATCC BAA-589 / NCTC 13251) protein is Pertussis toxin subunit 1 (ptxA).